Consider the following 761-residue polypeptide: Prolyl endopeptidase FAP (761 aa).

Residues 1-4 are Cytoplasmic-facing; sequence MKTW. The helical; Signal-anchor for type II membrane protein transmembrane segment at 5–25 threads the bilayer; the sequence is LKTVFGVTTLAALALVVICIV. Over 26 to 761 the chain is Extracellular; it reads LRPSRVYKPE…FLKQCFSLSD (736 aa). N-linked (GlcNAc...) asparagine glycans are attached at residues asparagine 49, asparagine 92, and asparagine 99. The substrate site is built by glutamate 203 and glutamate 204. 2 N-linked (GlcNAc...) asparagine glycosylation sites follow: asparagine 227 and asparagine 314. 3 disulfide bridges follow: cysteine 321–cysteine 332, cysteine 438–cysteine 441, and cysteine 448–cysteine 466. Serine 624 serves as the catalytic Charge relay system. Cysteine 643 and cysteine 756 are joined by a disulfide. Asparagine 679 is a glycosylation site (N-linked (GlcNAc...) asparagine). Active-site charge relay system residues include aspartate 702 and histidine 734.

Belongs to the peptidase S9B family. Homodimer; homodimerization is required for activity of both plasma membrane and soluble forms. The monomer is inactive. Heterodimer with DPP4. Interacts with PLAUR; the interaction occurs at the cell surface of invadopodia membranes. Interacts with ITGB1. Interacts with ITGA3. Associates with integrin alpha-3/beta-1; the association occurs in a collagen-dependent manner at the cell surface of invadopodia membranes. N-glycosylated. Post-translationally, the N-terminus may be blocked. In terms of tissue distribution, expressed strongly in uterus, pancreas, submaxillary gland and skin, less in lymph node, ovary, skeletal muscle, adrenal and bone marrow. Expressed in reactive stromal fibroblast in epithelial cancers. Expressed in melanocytes but not melanomas (at protein level). Detected in fibroblasts, in placenta, uterus, embryos from day 7-19 and in newborn mice (P1).

The protein localises to the cell surface. The protein resides in the cell membrane. It localises to the cell projection. It is found in the lamellipodium membrane. Its subcellular location is the invadopodium membrane. The protein localises to the ruffle membrane. The protein resides in the membrane. It localises to the secreted. It catalyses the reaction Hydrolysis of Pro-|-Xaa &gt;&gt; Ala-|-Xaa in oligopeptides.. The enzyme catalyses Release of an N-terminal dipeptide, Xaa-Yaa-|-Zaa-, from a polypeptide, preferentially when Yaa is Pro, provided Zaa is neither Pro nor hydroxyproline.. With respect to regulation, gelatinase activity is inhibited by serine-protease inhibitors, such as phenylmethylsulfonyl fluoride (PMSF), 4-(2-aminoethyl)-benzenesulfonyl fluoride hydrochloride (AEBSF), 4-amidino phenylsulfonyl fluoride (APSF) and diisopropyl fluorophosphate (DFP), N-ethylmaleimide (NEM) and phenylmethylsulfonyl fluoride (PMSF). Dipeptidyl peptidase activity is inhibited by 2,2'-azino-bis(3-ethylbenzthiazoline-6-sulfonic acid), diisopropylfluorophosphate (DFP). Prolyl endopeptidase activity is inhibited by the boronic acid peptide Ac-Gly-BoroPro, Ac-Gly-Pro-chloromethyl ketone and Thr-Ser-Gly-chloromethyl ketone. Cell surface glycoprotein serine protease that participates in extracellular matrix degradation and involved in many cellular processes including tissue remodeling, fibrosis, wound healing, inflammation and tumor growth. Both plasma membrane and soluble forms exhibit post-proline cleaving endopeptidase activity, with a marked preference for Ala/Ser-Gly-Pro-Ser/Asn/Ala consensus sequences, on substrate such as alpha-2-antiplasmin SERPINF2 and SPRY2. Degrade also gelatin, heat-denatured type I collagen, but not native collagen type I and IV, vibronectin, tenascin, laminin, fibronectin, fibrin or casein. Also has dipeptidyl peptidase activity, exhibiting the ability to hydrolyze the prolyl bond two residues from the N-terminus of synthetic dipeptide substrates provided that the penultimate residue is proline, with a preference for Ala-Pro, Ile-Pro, Gly-Pro, Arg-Pro and Pro-Pro. Natural neuropeptide hormones for dipeptidyl peptidase are the neuropeptide Y (NPY), peptide YY (PYY), substance P (TAC1) and brain natriuretic peptide 32 (NPPB). The plasma membrane form, in association with either DPP4, PLAUR or integrins, is involved in the pericellular proteolysis of the extracellular matrix (ECM), and hence promotes cell adhesion, migration and invasion through the ECM. Plays a role in tissue remodeling during development and wound healing. Participates in the cell invasiveness towards the ECM in malignant melanoma cancers. Enhances tumor growth progression by increasing angiogenesis, collagen fiber degradation and apoptosis and by reducing antitumor response of the immune system. Promotes glioma cell invasion through the brain parenchyma by degrading the proteoglycan brevican. Acts as a tumor suppressor in melanocytic cells through regulation of cell proliferation and survival in a serine protease activity-independent manner. The protein is Prolyl endopeptidase FAP of Mus musculus (Mouse).